The chain runs to 703 residues: Pentatricopeptide repeat-containing protein At1g22830 (703 aa).

PPR repeat units lie at residues valine 82–phenylalanine 116, aspartate 117–leucine 147, histidine 148–alanine 182, aspartate 183–cysteine 217, asparagine 218–arginine 248, aspartate 249–alanine 283, serine 284–isoleucine 318, glycine 319–serine 353, isoleucine 356–asparagine 386, serine 387–proline 421, asparagine 422–arginine 452, cysteine 458–arginine 488, aspartate 489–proline 523, aspartate 524–valine 554, and arginine 560–alanine 594. The segment at methionine 595–aspartate 671 is type E motif. The tract at residues aspartate 671–glycine 703 is disordered.

Belongs to the PPR family. PCMP-E subfamily.

The polypeptide is Pentatricopeptide repeat-containing protein At1g22830 (PCMP-E24) (Arabidopsis thaliana (Mouse-ear cress)).